We begin with the raw amino-acid sequence, 236 residues long: RNA-binding protein 24 (236 aa).

Residues 11–88 form the RRM domain; sequence TKIFVGGLPY…RKANVNLAYL (78 aa). The tract at residues 175 to 199 is necessary for interaction with EIF4E; sequence QYPYAASPAAAGYVTTGGYSYAVQQ.

Interacts with EIF4E; this interaction prevents EIF4E from binding to p53/TP53 mRNA and inhibits the assembly of translation initiation complex. Expressed strongly in heart and skeletal muscles. Weakly expressed in intestine, aorta, liver, lung, kidney, uterus and bladder.

The protein localises to the nucleus. Its subcellular location is the cytoplasm. In terms of biological role, multifunctional RNA-binding protein involved in the regulation of pre-mRNA splicing, mRNA stability and mRNA translation important for cell fate decision and differentiation. Plays a major role in pre-mRNA alternative splicing regulation. Mediates preferentially muscle-specific exon inclusion in numerous mRNAs important for striated cardiac and skeletal muscle cell differentiation. Binds to intronic splicing enhancer (ISE) composed of stretches of GU-rich motifs localized in flanking intron of exon that will be included by alternative splicing. Involved in embryonic stem cell (ESC) transition to cardiac cell differentiation by promoting pre-mRNA alternative splicing events of several pluripotency and/or differentiation genes. Plays a role in the regulation of mRNA stability. Binds to 3'-untranslated region (UTR) AU-rich elements in target transcripts, such as CDKN1A and MYOG, leading to maintain their stabilities. Involved in myogenic differentiation by regulating MYOG levels. Binds to multiple regions in the mRNA 3'-UTR of TP63, hence inducing its destabilization. Also promotes the destabilization of the CHRM2 mRNA via its binding to a region in the coding sequence. Plays a role in the regulation of mRNA translation. Mediates repression of p53/TP53 mRNA translation through its binding to U-rich element in the 3'-UTR, hence preventing EIF4E from binding to p53/TP53 mRNA and translation initiation. Binds to a huge amount of mRNAs. Required for embryonic heart development, sarcomer and M-band formation in striated muscles. Together with RBM20, promotes the expression of short isoforms of PDLIM5/ENH in cardiomyocytes. The sequence is that of RNA-binding protein 24 from Mus musculus (Mouse).